A 325-amino-acid chain; its full sequence is RepFIB replication protein A (325 aa).

Residues 279–298 are disordered; that stretch reads APNDESKENPLPPSPAEKVS.

The protein belongs to the initiator RepB protein family.

Functionally, this protein is essential for plasmid replication; it is involved in copy control functions. In vitro, binds to the DNA repeat units, BCDD'D'', EFG and HIJ. This Escherichia coli (strain K12) protein is RepFIB replication protein A (repB).